Reading from the N-terminus, the 75-residue chain is Small ribosomal subunit protein bS18 (75 aa).

It belongs to the bacterial ribosomal protein bS18 family. As to quaternary structure, part of the 30S ribosomal subunit. Forms a tight heterodimer with protein bS6.

Its function is as follows. Binds as a heterodimer with protein bS6 to the central domain of the 16S rRNA, where it helps stabilize the platform of the 30S subunit. In Thermotoga maritima (strain ATCC 43589 / DSM 3109 / JCM 10099 / NBRC 100826 / MSB8), this protein is Small ribosomal subunit protein bS18.